A 427-amino-acid chain; its full sequence is Trigger factor (427 aa).

The PPIase FKBP-type domain maps to 163 to 248; sequence GDTVVIDFEG…VHEVKAKELP (86 aa).

The protein belongs to the FKBP-type PPIase family. Tig subfamily.

It is found in the cytoplasm. It catalyses the reaction [protein]-peptidylproline (omega=180) = [protein]-peptidylproline (omega=0). Functionally, involved in protein export. Acts as a chaperone by maintaining the newly synthesized protein in an open conformation. Functions as a peptidyl-prolyl cis-trans isomerase. The polypeptide is Trigger factor (Enterococcus faecalis (strain ATCC 700802 / V583)).